Consider the following 489-residue polypeptide: Cobyric acid synthase (489 aa).

Residues 252–441 (ALTIGVIQLP…IHGIFANTEF (190 aa)) form the GATase cobBQ-type domain. C330 acts as the Nucleophile in catalysis. H433 is a catalytic residue.

The protein belongs to the CobB/CobQ family. CobQ subfamily.

It functions in the pathway cofactor biosynthesis; adenosylcobalamin biosynthesis. Its function is as follows. Catalyzes amidations at positions B, D, E, and G on adenosylcobyrinic A,C-diamide. NH(2) groups are provided by glutamine, and one molecule of ATP is hydrogenolyzed for each amidation. This chain is Cobyric acid synthase, found in Herpetosiphon aurantiacus (strain ATCC 23779 / DSM 785 / 114-95).